The chain runs to 162 residues: Cyclic pyranopterin monophosphate synthase (162 aa).

Residues 75–77 and 115–116 contribute to the substrate site; these read MCH and ME. Aspartate 130 is a catalytic residue.

The protein belongs to the MoaC family. Homohexamer; trimer of dimers.

It catalyses the reaction (8S)-3',8-cyclo-7,8-dihydroguanosine 5'-triphosphate = cyclic pyranopterin phosphate + diphosphate. Its pathway is cofactor biosynthesis; molybdopterin biosynthesis. Functionally, catalyzes the conversion of (8S)-3',8-cyclo-7,8-dihydroguanosine 5'-triphosphate to cyclic pyranopterin monophosphate (cPMP). The chain is Cyclic pyranopterin monophosphate synthase from Geobacillus thermodenitrificans (strain NG80-2).